Consider the following 336-residue polypeptide: tRNA N6-adenosine threonylcarbamoyltransferase (336 aa).

Fe cation is bound by residues His111 and His115. Residues 134–138 (LVSGG), Asp167, Gly180, and Asn270 each bind substrate. Residue Asp298 participates in Fe cation binding.

It belongs to the KAE1 / TsaD family. It depends on Fe(2+) as a cofactor.

It localises to the cytoplasm. The enzyme catalyses L-threonylcarbamoyladenylate + adenosine(37) in tRNA = N(6)-L-threonylcarbamoyladenosine(37) in tRNA + AMP + H(+). In terms of biological role, required for the formation of a threonylcarbamoyl group on adenosine at position 37 (t(6)A37) in tRNAs that read codons beginning with adenine. Is involved in the transfer of the threonylcarbamoyl moiety of threonylcarbamoyl-AMP (TC-AMP) to the N6 group of A37, together with TsaE and TsaB. TsaD likely plays a direct catalytic role in this reaction. This Acinetobacter baumannii (strain SDF) protein is tRNA N6-adenosine threonylcarbamoyltransferase.